The following is a 313-amino-acid chain: D-alanine--D-alanine ligase (313 aa).

In terms of domain architecture, ATP-grasp spans Lys-108–Ala-308. Position 138–193 (Val-138–Tyr-193) interacts with ATP. Mg(2+) contacts are provided by Asp-262, Glu-275, and Asn-277.

It belongs to the D-alanine--D-alanine ligase family. Mg(2+) serves as cofactor. The cofactor is Mn(2+).

It localises to the cytoplasm. The catalysed reaction is 2 D-alanine + ATP = D-alanyl-D-alanine + ADP + phosphate + H(+). Its pathway is cell wall biogenesis; peptidoglycan biosynthesis. Functionally, cell wall formation. This Paraburkholderia phytofirmans (strain DSM 17436 / LMG 22146 / PsJN) (Burkholderia phytofirmans) protein is D-alanine--D-alanine ligase.